Reading from the N-terminus, the 256-residue chain is Protein FixA (256 aa).

The protein belongs to the ETF beta-subunit/FixA family. In terms of assembly, heterodimer of FixA and FixB.

The protein operates within amine and polyamine metabolism; carnitine metabolism. Its function is as follows. Required for anaerobic carnitine reduction. May bring reductant to CaiA. The protein is Protein FixA of Escherichia coli O7:K1 (strain IAI39 / ExPEC).